The primary structure comprises 89 residues: Sodium channel toxin To13 (89 aa).

Positions 1 to 18 are cleaved as a signal peptide; sequence MKTLFLIITSFILLEVEG. Residues 20 to 87 enclose the LCN-type CS-alpha/beta domain; that stretch reads KNGYPRDSKG…TWKNKEPKCK (68 aa). 4 disulfides stabilise this stretch: C30/C86, C34/C60, C45/C67, and C49/C69.

This sequence belongs to the long (4 C-C) scorpion toxin superfamily. Sodium channel inhibitor family. Expressed by the venom gland.

The protein localises to the secreted. Inhibits voltage-gated sodium channels (Nav). This is Sodium channel toxin To13 from Tityus obscurus (Amazonian scorpion).